The sequence spans 697 residues: Elongation factor G 1 (697 aa).

Residues 8–283 enclose the tr-type G domain; that stretch reads ERYRNFGIMA…AVVDFLPSPV (276 aa). Residues 17 to 24, 81 to 85, and 135 to 138 each bind GTP; these read AHIDAGKT, DTPGH, and NKMD.

It belongs to the TRAFAC class translation factor GTPase superfamily. Classic translation factor GTPase family. EF-G/EF-2 subfamily.

It localises to the cytoplasm. Functionally, catalyzes the GTP-dependent ribosomal translocation step during translation elongation. During this step, the ribosome changes from the pre-translocational (PRE) to the post-translocational (POST) state as the newly formed A-site-bound peptidyl-tRNA and P-site-bound deacylated tRNA move to the P and E sites, respectively. Catalyzes the coordinated movement of the two tRNA molecules, the mRNA and conformational changes in the ribosome. The sequence is that of Elongation factor G 1 from Anaeromyxobacter dehalogenans (strain 2CP-C).